We begin with the raw amino-acid sequence, 272 residues long: Cyclase-like protein 2 (272 aa).

The N-terminal stretch at 1-24 is a signal peptide; sequence MAVPPLFFLLTLLSLPSLLISAGA.

This sequence belongs to the Cyclase 1 superfamily.

Its subcellular location is the secreted. It is found in the extracellular space. The protein resides in the extracellular matrix. May function redundantly with CYCLASE1 for normal plant growth, development and viability. The polypeptide is Cyclase-like protein 2 (Arabidopsis thaliana (Mouse-ear cress)).